The following is a 38-amino-acid chain: Potassium channel toxin alpha-KTx 3.2 (38 aa).

3 disulfides stabilise this stretch: C8-C28, C14-C33, and C18-C35.

It belongs to the short scorpion toxin superfamily. Potassium channel inhibitor family. Alpha-KTx 03 subfamily. Expressed by the venom gland.

It localises to the secreted. In terms of biological role, potent inhibitor of the Shaker potassium channels and its mammalian homologs (Kv1.1/KCNA1, Kv1.3/KCNA3, Kv1.6/KCNA6) (Ki&lt;1 nM for all channels). Also blocks Kv1.2/KCNA2 (IC(50)=26.8 nM). It also shows a weak interaction with nicotinic acetylcholine receptors (nAChR), suggesting it may weakly inhibit it. The chain is Potassium channel toxin alpha-KTx 3.2 from Leiurus hebraeus (Hebrew deathstalker scorpion).